The following is a 47-amino-acid chain: uncharacterized protein (47 aa).

The interval 24–47 (FGPNPIEPPTDIAPDPDSTKTWLI) is disordered.

This is an uncharacterized protein from Mycobacterium tuberculosis (strain ATCC 25618 / H37Rv).